The chain runs to 126 residues: UPF0538 protein C2orf76 homolog (126 aa).

Belongs to the UPF0538 family.

The sequence is that of UPF0538 protein C2orf76 homolog from Danio rerio (Zebrafish).